Reading from the N-terminus, the 479-residue chain is Sucrose-6-phosphate hydrolase (479 aa).

The segment at 1–28 (MTAHDQELRRRAYEEVEKKEPIANSDPH) is disordered. Substrate-binding positions include 40–43 (LLND), Q59, 102–103 (YS), 161–162 (RD), and E220. D43 is a catalytic residue.

This sequence belongs to the glycosyl hydrolase 32 family.

It catalyses the reaction Hydrolysis of terminal non-reducing beta-D-fructofuranoside residues in beta-D-fructofuranosides.. It functions in the pathway glycan biosynthesis; sucrose metabolism. This chain is Sucrose-6-phosphate hydrolase (sacA), found in Bacillus subtilis (strain 168).